The sequence spans 294 residues: tRNA pseudouridine synthase B (294 aa).

D39 functions as the Nucleophile in the catalytic mechanism.

The protein belongs to the pseudouridine synthase TruB family. Type 1 subfamily.

It catalyses the reaction uridine(55) in tRNA = pseudouridine(55) in tRNA. Responsible for synthesis of pseudouridine from uracil-55 in the psi GC loop of transfer RNAs. The polypeptide is tRNA pseudouridine synthase B (Streptococcus pyogenes serotype M5 (strain Manfredo)).